A 135-amino-acid polypeptide reads, in one-letter code: Large ribosomal subunit protein uL16c (135 aa).

Residues 1–23 show a composition bias toward basic residues; it reads MLSPKKTKFRKEHRGRMKGRSSR. Positions 1–24 are disordered; sequence MLSPKKTKFRKEHRGRMKGRSSRG.

This sequence belongs to the universal ribosomal protein uL16 family. Part of the 50S ribosomal subunit.

It is found in the plastid. The protein resides in the chloroplast. In Pelargonium hortorum (Common geranium), this protein is Large ribosomal subunit protein uL16c.